Here is a 282-residue protein sequence, read N- to C-terminus: Dihydropteroate synthase (282 aa).

Positions 15–267 constitute a Pterin-binding domain; sequence PHVMGILNVT…DVKETVEAMR (253 aa). A Mg(2+)-binding site is contributed by N22. Residues T62, D96, N115, D185, K221, and 255-257 each bind (7,8-dihydropterin-6-yl)methyl diphosphate; that span reads RVH.

Belongs to the DHPS family. In terms of assembly, homodimer. It depends on Mg(2+) as a cofactor.

The enzyme catalyses (7,8-dihydropterin-6-yl)methyl diphosphate + 4-aminobenzoate = 7,8-dihydropteroate + diphosphate. Its pathway is cofactor biosynthesis; tetrahydrofolate biosynthesis; 7,8-dihydrofolate from 2-amino-4-hydroxy-6-hydroxymethyl-7,8-dihydropteridine diphosphate and 4-aminobenzoate: step 1/2. Catalyzes the condensation of para-aminobenzoate (pABA) with 6-hydroxymethyl-7,8-dihydropterin diphosphate (DHPt-PP) to form 7,8-dihydropteroate (H2Pte), the immediate precursor of folate derivatives. This chain is Dihydropteroate synthase (folP), found in Shigella flexneri.